A 210-amino-acid chain; its full sequence is Proteasome subunit beta (210 aa).

Residues 1 to 7 (MEVLKTG) constitute a propeptide, removed in mature form; by autocatalysis. Thr-8 serves as the catalytic Nucleophile.

This sequence belongs to the peptidase T1B family. In terms of assembly, the 20S proteasome core is composed of 14 alpha and 14 beta subunits that assemble into four stacked heptameric rings, resulting in a barrel-shaped structure. The two inner rings, each composed of seven catalytic beta subunits, are sandwiched by two outer rings, each composed of seven alpha subunits. The catalytic chamber with the active sites is on the inside of the barrel. Has a gated structure, the ends of the cylinder being occluded by the N-termini of the alpha-subunits. Is capped at one or both ends by the proteasome regulatory ATPase, PAN.

Its subcellular location is the cytoplasm. The catalysed reaction is Cleavage of peptide bonds with very broad specificity.. The formation of the proteasomal ATPase PAN-20S proteasome complex, via the docking of the C-termini of PAN into the intersubunit pockets in the alpha-rings, triggers opening of the gate for substrate entry. Interconversion between the open-gate and close-gate conformations leads to a dynamic regulation of the 20S proteasome proteolysis activity. In terms of biological role, component of the proteasome core, a large protease complex with broad specificity involved in protein degradation. In Picrophilus torridus (strain ATCC 700027 / DSM 9790 / JCM 10055 / NBRC 100828 / KAW 2/3), this protein is Proteasome subunit beta.